Reading from the N-terminus, the 308-residue chain is tRNA pseudouridine synthase B (308 aa).

The Nucleophile role is filled by Asp48.

Belongs to the pseudouridine synthase TruB family. Type 1 subfamily.

The enzyme catalyses uridine(55) in tRNA = pseudouridine(55) in tRNA. In terms of biological role, responsible for synthesis of pseudouridine from uracil-55 in the psi GC loop of transfer RNAs. The protein is tRNA pseudouridine synthase B of Histophilus somni (strain 129Pt) (Haemophilus somnus).